The sequence spans 632 residues: DNA polymerase eta (632 aa).

Residues 26–309 (IAHIDMNAFF…FEITSFWTLG (284 aa)) enclose the UmuC domain. Residues aspartate 30 and aspartate 155 each contribute to the Mg(2+) site. The UBZ3-type zinc finger occupies 545-580 (EKTPKLECCKYQVTFTDQKALQEHADYHLALKLSEG). Positions 552, 553, 568, and 572 each coordinate Zn(2+). The interval 598-632 (LLFSRKRPNSQHTATPQKKQVTSSKNILSFFTRKK) is disordered. The segment covering 607 to 626 (SQHTATPQKKQVTSSKNILS) has biased composition (polar residues). The interval 625–632 (LSFFTRKK) is POL30-binding.

Belongs to the DNA polymerase type-Y family. In terms of assembly, interacts with POL30. This interaction is essential for the polymerase eta function.

Its subcellular location is the nucleus. It carries out the reaction DNA(n) + a 2'-deoxyribonucleoside 5'-triphosphate = DNA(n+1) + diphosphate. In terms of biological role, DNA polymerase specifically involved in DNA repair. Plays an important role in translesion synthesis, where the normal high fidelity DNA polymerases cannot proceed and DNA synthesis stalls. Plays an important role in the repair of UV-induced pyrimidine dimers. Depending on the context, it inserts the correct base, but causes frequent base transitions and transversions. Efficiently incorporates nucleotides opposite to other UV or oxidative DNA damages like O(6)-methylguanine, 7,8-dihydro-8-oxoguanine, 2,6-diamino-4-hydroxy-5-formamidopyrimidine of 2'-deoxyguanosine (FaPydG), or p-benzoquinone DNA adducts. The protein is DNA polymerase eta (RAD30) of Saccharomyces cerevisiae (strain ATCC 204508 / S288c) (Baker's yeast).